The chain runs to 288 residues: MATYAVGDLQGCLQPLKCLLERVKFDPAVDRLWLVGDLVNRGPESLQTLRYLYSIRHSLTCVLGNHDLHLLAAWQNVERLKKSDTLREIIEAPDADQLLDWLRQQKLLHYDEPRGIALVHAGIPPQWTLGKALELAGEVEEVLRDDERLKLYLDGMYGNEPNKWSKNLGGVERLRVITNYLTRMRFCTGTGKLDLKSKEGLGTAPKGYKPWFAHKDRRSRHVKIIFGHWAALEGRVDEPGIIALDTGCVWGGTMTLYNVDSGEYLRCDCADDGTLRPPAQPTKLIDQP.

The protein belongs to the Ap4A hydrolase family.

The enzyme catalyses P(1),P(4)-bis(5'-adenosyl) tetraphosphate + H2O = 2 ADP + 2 H(+). Hydrolyzes diadenosine 5',5'''-P1,P4-tetraphosphate to yield ADP. The sequence is that of Bis(5'-nucleosyl)-tetraphosphatase, symmetrical from Pseudomonas putida (strain W619).